A 64-amino-acid chain; its full sequence is Small, acid-soluble spore protein beta (64 aa).

This sequence belongs to the alpha/beta-type SASP family.

In terms of biological role, SASP are bound to spore DNA. They are double-stranded DNA-binding proteins that cause DNA to change to an a-like conformation. They protect the DNA backbone from chemical and enzymatic cleavage and are thus involved in dormant spore's high resistance to UV light. This chain is Small, acid-soluble spore protein beta, found in Paraclostridium bifermentans (Clostridium bifermentans).